Reading from the N-terminus, the 471-residue chain is Arginine biosynthesis bifunctional protein ArgJ, mitochondrial (471 aa).

Residues 1–33 constitute a mitochondrion transit peptide; sequence MAMAGCNGFFLHQLRQPRLQLARQLGRTPSRAY. Residues threonine 201, lysine 230, threonine 241, glutamate 327, asparagine 466, and threonine 471 each coordinate substrate. Threonine 241 functions as the Nucleophile in the catalytic mechanism.

Belongs to the ArgJ family. As to quaternary structure, heterodimer of an alpha and a beta chain. In terms of processing, the alpha and beta chains are autoproteolytically processed from a single precursor protein within the mitochondrion.

Its subcellular location is the mitochondrion matrix. The enzyme catalyses N(2)-acetyl-L-ornithine + L-glutamate = N-acetyl-L-glutamate + L-ornithine. It catalyses the reaction L-glutamate + acetyl-CoA = N-acetyl-L-glutamate + CoA + H(+). The protein operates within amino-acid biosynthesis; L-arginine biosynthesis; L-ornithine and N-acetyl-L-glutamate from L-glutamate and N(2)-acetyl-L-ornithine (cyclic): step 1/1. It functions in the pathway amino-acid biosynthesis; L-arginine biosynthesis; N(2)-acetyl-L-ornithine from L-glutamate: step 1/4. Catalyzes two activities which are involved in the cyclic version of arginine biosynthesis: the synthesis of acetylglutamate from glutamate and acetyl-CoA, and of ornithine by transacetylation between acetylornithine and glutamate. The sequence is that of Arginine biosynthesis bifunctional protein ArgJ, mitochondrial from Chaetomium globosum (strain ATCC 6205 / CBS 148.51 / DSM 1962 / NBRC 6347 / NRRL 1970) (Soil fungus).